We begin with the raw amino-acid sequence, 307 residues long: Malate dehydrogenase (307 aa).

NAD(+)-binding positions include 8-13 (GAGNVG) and aspartate 32. The substrate site is built by arginine 81 and arginine 87. Residues asparagine 94 and 117–119 (VTN) contribute to the NAD(+) site. Substrate is bound by residues asparagine 119 and arginine 150. Catalysis depends on histidine 174, which acts as the Proton acceptor.

This sequence belongs to the LDH/MDH superfamily.

The catalysed reaction is (S)-malate + NAD(+) = oxaloacetate + NADH + H(+). Catalyzes the reversible oxidation of malate to oxaloacetate. The protein is Malate dehydrogenase (mdh) of Methanosarcina barkeri (strain Fusaro / DSM 804).